The chain runs to 335 residues: L-lactate dehydrogenase B chain (335 aa).

Residues 29–57 and Arg99 each bind NAD(+); that span reads GQVGMACAISILEKGLCDELALVDVVEDK. Substrate is bound by residues Arg106, Asn138, and Arg169. Asn138 contacts NAD(+). His193 (proton acceptor) is an active-site residue. Thr248 contributes to the substrate binding site.

The protein belongs to the LDH/MDH superfamily. LDH family. As to quaternary structure, homotetramer.

Its subcellular location is the cytoplasm. The enzyme catalyses (S)-lactate + NAD(+) = pyruvate + NADH + H(+). It functions in the pathway fermentation; pyruvate fermentation to lactate; (S)-lactate from pyruvate: step 1/1. Interconverts simultaneously and stereospecifically pyruvate and lactate with concomitant interconversion of NADH and NAD(+). The chain is L-lactate dehydrogenase B chain (LDHB) from Sceloporus undulatus (Eastern fence lizard).